Consider the following 495-residue polypeptide: Surface E' protein (495 aa).

The helical transmembrane segment at 224–235 (GTLIGLVALIGV) threads the bilayer.

The protein resides in the cell membrane. This Coxiella burnetii protein is Surface E' protein (cbbE').